Consider the following 597-residue polypeptide: MRTTLTGTASVLDTTLTRLIDDVIENGSSFLADDENLQHYKQHLSHLETASKIALLRECLCVRPPLPLLPEDLLQNVDSILTRVRQHKILTPIFSLSPSRLIKHGDLGATRIHLWRGDITTLTGVTAITNAANSQGLGCFQPTHRCIDNIIHAEAGPRLREECFQRMQARGKELEPGEVLVTEGHALFASSVMHTVGPQLKRGASPTETERRQLAKCYESILEALELLPSDEDGSKSIALCCISTGLFAFPADEAAEIAVSTVTSWLQKHPSTTITDVIFNTFTQSDTEFYSKLLGPSHTKSISPVENTPQGSLSLAREWLSSADAVLVTAGAGLSAAEGLDYHSRDLFKRNFPGCLKFGLTSLYSVFGFNDWPSEEHRWGYFFTHLNMVANWSNTPTYQILIPWLRNFGQDAFVRTSNADGLFLANGWPKEQLSTPQGSYGYLQCLNNCRVDAVVPSAPLVADAMPHIDKATQKLMDPSKIPLCRFCGSKMSICVRAGSWFNQAPYQEGEAQWKAWKSRVLREKKNLVILELGVGMNTPGVLRWPNEDLVMRSDGRVKLIRVGMGPEAMVPWEQEDEGLSTCVQGDIGRAIPLLLE.

Residues 99–299 (SRLIKHGDLG…FYSKLLGPSH (201 aa)) form the Macro domain. Positions 118, 119, and 133 each coordinate ADP-D-ribose. Zn(2+) is bound by residues Cys139, His144, and Cys146. Residues Cys146, Ile147, Asp148, Ser244, Thr245, Gly246, and Phe248 each coordinate ADP-D-ribose. A Deacetylase sirtuin-type domain is found at 307–597 (ENTPQGSLSL…IGRAIPLLLE (291 aa)). NAD(+) is bound by residues Ala333, 418–421 (SNAD), and Gln438. The Zn(2+) site is built by Cys446, Cys450, Cys485, and Cys488. Val584 contributes to the NAD(+) binding site.

It in the N-terminal section; belongs to the MacroD-type family. Zn-Macro subfamily. This sequence in the C-terminal section; belongs to the sirtuin family. Class M subfamily. As to quaternary structure, monomer. It depends on Zn(2+) as a cofactor.

It catalyses the reaction 5-O-(ADP-D-ribosyl)-L-glutamyl-[protein] + H2O = L-glutamyl-[protein] + ADP-D-ribose + H(+). In terms of biological role, is probably a bifunctional enzyme with ADP-ribosyltransferase and ADP-ribosylhydrolase activities. In vitro, can act as an ADP-ribosylhydrolase that hydrolyzes ADP-ribosyl-glutamate bonds. It can remove the ADP-ribosyl modification from the human mono-ADP-ribosylated PARP1 E988Q mutant, which is primarily modified on glutamate site with only minor aspartate contribution. It cannot hydrolyze the ADP-ribosyl-arpartate bond in ribosylated S.pyogenes GcvH-L. The polypeptide is Probable bifunctional ADP-ribose hydrolase/ADP-ribosyltransferase (Fusarium oxysporum f. sp. cubense).